The chain runs to 483 residues: FAD-linked oxidoreductase pgmH (483 aa).

Positions 54 to 215 (SIRLATLVVY…TEFKYRVHKQ (162 aa)) constitute an FAD-binding PCMH-type domain.

It belongs to the oxygen-dependent FAD-linked oxidoreductase family. FAD serves as cofactor.

It participates in pigment biosynthesis. The protein operates within secondary metabolite biosynthesis. Functionally, FAD-linked oxidoreductase; part of the gene cluster that mediates the biosynthesis of pleosporalin A, ascomycone A, as well as a third cryptic naphthoquinone derived pigment, all responsible for the coloration of conidia. Essential for the production of pleosporalin A, but not the 2 other final products. The pathway begins with the biosynthesis of the cyclized heptaketide 3-acetonyl-1,6,8-trihydroxy-2-naphthaldehyde by the NR-PKS pgmA. The C-6 hydroxyl group is further methylated by the O-methyltransferase pgmB to yield fusarubinaldehyde which is in turn oxidized by the cytochrome P450 monooxygenase pgmC at C-9. The C-1 hydroxyl group is then methylated spontaneously. Although pgmE, pgmD and pgmH are essential for the production of pleosporalin A, it is not the case for the 2 other final products and it remains difficult to assign a specific function to each enzyme. PgmF and pgmG seem not to be involved in pigment biosynthesis although they were regulated by the cluster-specific transcription factor pgmR. The chain is FAD-linked oxidoreductase pgmH from Aspergillus terreus (strain NIH 2624 / FGSC A1156).